The chain runs to 428 residues: tRNA(Ile)-lysidine synthase (428 aa).

Residue 28-33 participates in ATP binding; sequence SGGVDS.

It belongs to the tRNA(Ile)-lysidine synthase family.

Its subcellular location is the cytoplasm. The enzyme catalyses cytidine(34) in tRNA(Ile2) + L-lysine + ATP = lysidine(34) in tRNA(Ile2) + AMP + diphosphate + H(+). Functionally, ligates lysine onto the cytidine present at position 34 of the AUA codon-specific tRNA(Ile) that contains the anticodon CAU, in an ATP-dependent manner. Cytidine is converted to lysidine, thus changing the amino acid specificity of the tRNA from methionine to isoleucine. The protein is tRNA(Ile)-lysidine synthase of Streptococcus pyogenes serotype M3 (strain ATCC BAA-595 / MGAS315).